Here is a 676-residue protein sequence, read N- to C-terminus: Basic proline-rich protein (676 aa).

An N-terminal signal peptide occupies residues 1-16; it reads MLPILLSVALLALSSA. Phosphoserine occurs at positions 28 and 30. Residues 29–676 are disordered; that stretch reads NSAEKFLRPP…PRPPPGPPPQ (648 aa). 3 stretches are compositionally biased toward pro residues: residues 36 to 50, 71 to 424, and 442 to 676; these read RPPPGGGPPRPPPPE, GPAP…PPAD, and PPPA…PPPQ. The propeptide occupies 409 to 457; it reads APPGARPPPPPPPPADEPQQGPAPSGDKPKKKPPPPAGPPPPGPPSPGP.

As to expression, acinar cells and secretory granules of the parotid gland.

The protein resides in the secreted. Its function is as follows. The parotid hormone stimulates dentinal fluid transport in teeth. The polypeptide is Basic proline-rich protein (Sus scrofa (Pig)).